The chain runs to 169 residues: NADH dehydrogenase [ubiquinone] 1 alpha subcomplex assembly factor 2 (169 aa).

Residues threonine 116 to glutamine 169 are disordered. A Phosphoserine modification is found at serine 134. Polar residues predominate over residues alanine 146–proline 156.

Belongs to the complex I NDUFA12 subunit family. As to quaternary structure, interacts with ARMC9. Highly expressed in ESCC cells. Also expressed in heart, skeletal muscle, liver, and in fibroblasts.

Its subcellular location is the mitochondrion. Acts as a molecular chaperone for mitochondrial complex I assembly. Complex I functions in the transfer of electrons from NADH to the respiratory chain. The immediate electron acceptor for the enzyme is believed to be ubiquinone. Is involved in the initial steps of cilia formation, including removal of CP110 from the mother centrioles, docking of membrane vesicles to the mother centrioles, and establishment of the transition zone. The protein is NADH dehydrogenase [ubiquinone] 1 alpha subcomplex assembly factor 2 (NDUFAF2) of Homo sapiens (Human).